Consider the following 158-residue polypeptide: Cyclic pyranopterin monophosphate synthase (158 aa).

Substrate-binding positions include 74–76 (MCH) and 112–113 (ME). The active site involves D127.

This sequence belongs to the MoaC family. In terms of assembly, homohexamer; trimer of dimers.

The catalysed reaction is (8S)-3',8-cyclo-7,8-dihydroguanosine 5'-triphosphate = cyclic pyranopterin phosphate + diphosphate. It functions in the pathway cofactor biosynthesis; molybdopterin biosynthesis. Functionally, catalyzes the conversion of (8S)-3',8-cyclo-7,8-dihydroguanosine 5'-triphosphate to cyclic pyranopterin monophosphate (cPMP). This Helicobacter pylori (strain ATCC 700392 / 26695) (Campylobacter pylori) protein is Cyclic pyranopterin monophosphate synthase.